Here is a 302-residue protein sequence, read N- to C-terminus: MASSDGDRLCRSNAVRRKTTPSYSGQYRTARRSVVVGPPDDSDDSLGYITTVGADSPSPVYADLYFEHKNTTPRVHQPNDSSGSEDDFEDIDEVVAAFREARLRHELVEDAVYENPLSVEKPSRSFTKNAAVKPKLEDSPKRAPPGAGAIASGRPISFSTAPKTATSSWCGPTPSYNKRVFCEAVRRVAAMQAQKAAEAAWNSNPPRNNAELDRLLTGAVIRITVHEGLNLIQAANEADLGEGASVSKRGHNRKTGDLQGGMGNEPMYAQVRKPKSRTDTQTTGRITNRSRARSASRTDTRK.

A compositionally biased stretch (basic and acidic residues) spans 1 to 10; sequence MASSDGDRLC. 2 disordered regions span residues 1–42 and 125–170; these read MASS…PDDS and SFTK…SSWC. The tract at residues 154–244 is interaction with gE; it reads RPISFSTAPK…ANEADLGEGA (91 aa). Positions 157-170 are enriched in polar residues; sequence SFSTAPKTATSSWC. A Nuclear export signal motif is present at residues 212–224; the sequence is LDRLLTGAVIRIT. The tract at residues 243-302 is disordered; that stretch reads GASVSKRGHNRKTGDLQGGMGNEPMYAQVRKPKSRTDTQTTGRITNRSRARSASRTDTRK.

It belongs to the alphaherpesvirinae VP22 tegument protein family. As to quaternary structure, interacts with gE (via C-terminus); this interaction is necessary for the recruitment of VP22/ORF9 to the Golgi and its packaging into virions. Interacts with gM (via C-terminus). Interacts with VP16/ORF10; this interaction allows the formation of a tripartite complex composed of VP16/ORF10, VP22/ORF9 and VHS/ORF17. Interacts with the capsid-binding protein ORF44. Interacts with host CGAS. Post-translationally, highly phosphorylated in the host cell. Packaging is selective for underphosphorylated forms.

It is found in the virion tegument. It localises to the host cytoplasm. The protein resides in the host nucleus. The protein localises to the host Golgi apparatus. Tegument protein that plays different roles during the time course of infection. Participates in both the accumulation of viral mRNAs and viral protein translation at late time of infection. Modulates the RNase activity of the virion host shutoff protein ORF17 probably to ensure necessary levels of key cellular mRNAs and proteins. Plays a role in microtubule reorganization that occurs after viral infection by stabilizing microtubule network. Plays a role in the inhibition of host innate immune system by targeting the CGAS enzymatic activity which is the principal cytosolic DNA sensor that detects invading viral DNA. Acts by mediating disruption of liquid-like droplets in which CGAS is activated, thereby preventing CGAS activity. This Homo sapiens (Human) protein is Tegument protein VP22.